A 438-amino-acid polypeptide reads, in one-letter code: High-affinity gluconate transporter (438 aa).

13 helical membrane passes run 2 to 22 (PLVI…RFKM), 23 to 43 (NGFI…GMPL), 52 to 72 (AGVG…AMLG), 108 to 128 (VGFA…VFTI), 134 to 154 (IPLL…HGFL), 174 to 194 (TLLY…PVYA), 222 to 242 (FGVS…RAIA), 258 to 278 (FLGD…FTFG), 292 to 312 (LVSS…GGAF), 327 to 347 (SMMH…AAVL), 349 to 369 (IALG…APLI), 370 to 390 (ATTG…SVIF), and 418 to 438 (MLET…NMVI).

Belongs to the GntP permease family.

The protein localises to the cell inner membrane. The protein operates within carbohydrate acid metabolism; D-gluconate degradation. Part of the gluconate utilization system Gnt-I; high-affinity intake of gluconate. The sequence is that of High-affinity gluconate transporter (gntT) from Escherichia coli (strain K12).